The sequence spans 398 residues: Acetate kinase 1 (398 aa).

Asn-9 is a Mg(2+) binding site. Lys-16 provides a ligand contact to ATP. Residue Arg-89 coordinates substrate. Asp-146 functions as the Proton donor/acceptor in the catalytic mechanism. Residues 206 to 210 (HLGNG), 281 to 283 (DCR), and 329 to 333 (GIGEN) each bind ATP. Position 384 (Glu-384) interacts with Mg(2+).

It belongs to the acetokinase family. In terms of assembly, homodimer. Mg(2+) is required as a cofactor. The cofactor is Mn(2+).

Its subcellular location is the cytoplasm. It carries out the reaction acetate + ATP = acetyl phosphate + ADP. Its pathway is metabolic intermediate biosynthesis; acetyl-CoA biosynthesis; acetyl-CoA from acetate: step 1/2. Catalyzes the formation of acetyl phosphate from acetate and ATP. Can also catalyze the reverse reaction. The protein is Acetate kinase 1 of Vibrio parahaemolyticus serotype O3:K6 (strain RIMD 2210633).